The primary structure comprises 422 residues: Validoxylamine A glucosyltransferase (422 aa).

Belongs to the glycosyltransferase 2 family. Mn(2+) is required as a cofactor.

The enzyme catalyses validoxylamine A + UDP-alpha-D-glucose = validamycin A + UDP + H(+). Its function is as follows. Involved in the biosynthesis of the antifungal agent validamycin A. Catalyzes the final attachment of glucose from UDP-alpha-D-glucose to validoxylamine A to yield validamycin A. UDP-glucose is the most efficient glycosyl donor, whereas GDP-glucose and ADP-glucose are much less efficient. ValG also utilizes UDP-galactose as substrate to produce the new validamycin analog, 4''-epi-validamycin A. This chain is Validoxylamine A glucosyltransferase, found in Streptomyces hygroscopicus subsp. jinggangensis (strain 5008).